Consider the following 194-residue polypeptide: Holliday junction branch migration complex subunit RuvA (194 aa).

Residues 1–63 form a domain I region; sequence MFEYMKGMIV…EDEAHLYGFV (63 aa). The interval 64–142 is domain II; that stretch reads DKEELAMFKK…DSQVEYDQNF (79 aa). The interval 143–146 is flexible linker; sequence FNHE. The interval 146–194 is domain III; that stretch reads ENKNNNEVVDALMALGYTKHEGEQAASAVRDTSLSTEEMIRKALNWLAR.

This sequence belongs to the RuvA family. Homotetramer. Forms an RuvA(8)-RuvB(12)-Holliday junction (HJ) complex. HJ DNA is sandwiched between 2 RuvA tetramers; dsDNA enters through RuvA and exits via RuvB. An RuvB hexamer assembles on each DNA strand where it exits the tetramer. Each RuvB hexamer is contacted by two RuvA subunits (via domain III) on 2 adjacent RuvB subunits; this complex drives branch migration. In the full resolvosome a probable DNA-RuvA(4)-RuvB(12)-RuvC(2) complex forms which resolves the HJ.

It is found in the cytoplasm. Functionally, the RuvA-RuvB-RuvC complex processes Holliday junction (HJ) DNA during genetic recombination and DNA repair, while the RuvA-RuvB complex plays an important role in the rescue of blocked DNA replication forks via replication fork reversal (RFR). RuvA specifically binds to HJ cruciform DNA, conferring on it an open structure. The RuvB hexamer acts as an ATP-dependent pump, pulling dsDNA into and through the RuvAB complex. HJ branch migration allows RuvC to scan DNA until it finds its consensus sequence, where it cleaves and resolves the cruciform DNA. This Alkaliphilus metalliredigens (strain QYMF) protein is Holliday junction branch migration complex subunit RuvA.